Consider the following 151-residue polypeptide: Ribosome maturation factor RimP (151 aa).

Belongs to the RimP family.

Its subcellular location is the cytoplasm. In terms of biological role, required for maturation of 30S ribosomal subunits. The protein is Ribosome maturation factor RimP of Haemophilus influenzae (strain PittEE).